Consider the following 583-residue polypeptide: Kelch-like protein 38 (583 aa).

Residues 34–101 (TDVILCTEDK…IYTGSITITM (68 aa)) form the BTB domain. One can recognise a BACK domain in the interval 136-237 (CLSMIRLSEI…HPTYLFQFIA (102 aa)). 6 Kelch repeats span residues 285–332 (TLVV…CIHS), 333–385 (ILYV…SYLH), 386–433 (FIFA…ANDQ), 435–481 (IYVF…VIED), 482–523 (KIYI…VINN), and 525–575 (LYVT…PLIC).

The protein is Kelch-like protein 38 (klhl38) of Danio rerio (Zebrafish).